The sequence spans 110 residues: Ribonuclease P protein component 1 (110 aa).

This sequence belongs to the eukaryotic/archaeal RNase P protein component 1 family. Consists of a catalytic RNA component and at least 4-5 protein subunits.

The protein localises to the cytoplasm. The catalysed reaction is Endonucleolytic cleavage of RNA, removing 5'-extranucleotides from tRNA precursor.. Functionally, part of ribonuclease P, a protein complex that generates mature tRNA molecules by cleaving their 5'-ends. The polypeptide is Ribonuclease P protein component 1 (Aeropyrum pernix (strain ATCC 700893 / DSM 11879 / JCM 9820 / NBRC 100138 / K1)).